We begin with the raw amino-acid sequence, 65 residues long: Adrenergic toxin rho-elapitoxin-Dp1a (65 aa).

4 disulfides stabilise this stretch: Cys-3–Cys-24, Cys-17–Cys-42, Cys-46–Cys-57, and Cys-58–Cys-63.

It belongs to the three-finger toxin family. Short-chain subfamily. Aminergic toxin sub-subfamily. In terms of tissue distribution, expressed by the venom gland.

It is found in the secreted. In terms of biological role, this toxin shows activities on different G-protein coupled receptors. It is highly potent on various alpha-adrenoceptors (ADRA) (subnanomolar affinity for ADRA1A). Order of potency is the following: ADRA1A &gt; ADRA1B &gt; ADRA1D &gt; ADRA2C. It is also found to reversibly bind to muscarinic acetylcholine receptors (CHRM), but the affinity is much weaker (CHRM1 and CHRM2, Ki&gt;1 uM; CHRM3, Ki=140 nM; CHRM4, Ki=120 nM; CHRM5, Ki=350 nM). This chain is Adrenergic toxin rho-elapitoxin-Dp1a, found in Dendroaspis polylepis polylepis (Black mamba).